Reading from the N-terminus, the 718-residue chain is Catalase-peroxidase (718 aa).

The tryptophyl-tyrosyl-methioninium (Trp-Tyr) (with M-246) cross-link spans 92 to 220 (WHAAGTYRTA…LASVMMGLIY (129 aa)). Histidine 93 serves as the catalytic Proton acceptor. A cross-link (tryptophyl-tyrosyl-methioninium (Tyr-Met) (with W-92)) is located at residues 220–246 (YVNPEGVDGHPDPLKTANDVRVTFERM). Histidine 261 lines the heme b pocket.

Belongs to the peroxidase family. Peroxidase/catalase subfamily. As to quaternary structure, homodimer or homotetramer. Heme b is required as a cofactor. Post-translationally, formation of the three residue Trp-Tyr-Met cross-link is important for the catalase, but not the peroxidase activity of the enzyme.

It catalyses the reaction H2O2 + AH2 = A + 2 H2O. The catalysed reaction is 2 H2O2 = O2 + 2 H2O. Functionally, bifunctional enzyme with both catalase and broad-spectrum peroxidase activity. The protein is Catalase-peroxidase of Shewanella halifaxensis (strain HAW-EB4).